Consider the following 288-residue polypeptide: Acetylglutamate kinase (288 aa).

Substrate is bound by residues 66–67, Arg-88, and Asn-182; that span reads GG.

The protein belongs to the acetylglutamate kinase family. ArgB subfamily.

It is found in the cytoplasm. It catalyses the reaction N-acetyl-L-glutamate + ATP = N-acetyl-L-glutamyl 5-phosphate + ADP. Its pathway is amino-acid biosynthesis; L-arginine biosynthesis; N(2)-acetyl-L-ornithine from L-glutamate: step 2/4. Its function is as follows. Catalyzes the ATP-dependent phosphorylation of N-acetyl-L-glutamate. In Brachyspira hyodysenteriae (strain ATCC 49526 / WA1), this protein is Acetylglutamate kinase.